Here is a 524-residue protein sequence, read N- to C-terminus: GMP synthase [glutamine-hydrolyzing] (524 aa).

The 199-residue stretch at 9–207 (RILILDFGSQ…VIHICQCIPN (199 aa)) folds into the Glutamine amidotransferase type-1 domain. The active-site Nucleophile is the cysteine 86. Catalysis depends on residues histidine 181 and glutamate 183. The GMPS ATP-PPase domain maps to 208-399 (WTTKHIIEDS…LGLPADLIYR (192 aa)). 235 to 241 (SGGVDSA) lines the ATP pocket.

In terms of assembly, homodimer.

It catalyses the reaction XMP + L-glutamine + ATP + H2O = GMP + L-glutamate + AMP + diphosphate + 2 H(+). The protein operates within purine metabolism; GMP biosynthesis; GMP from XMP (L-Gln route): step 1/1. In terms of biological role, catalyzes the synthesis of GMP from XMP. The chain is GMP synthase [glutamine-hydrolyzing] from Coxiella burnetii (strain RSA 331 / Henzerling II).